Reading from the N-terminus, the 124-residue chain is MNISLLRTKIHRATVTGADLNYEGSVSICPDLIKASGLLMNERVDIYNCNNGARFSTYVIKGKKGEICLNGAAARHVQKGDLVIICSYCGLSMDEAKKHEPTVVFVNAKNKVTEKRKEDRKNNK.

The active-site Schiff-base intermediate with substrate; via pyruvic acid is S25. S25 is modified (pyruvic acid (Ser)). T57 contacts substrate. The active-site Proton donor is the Y58. 71-73 (GAA) provides a ligand contact to substrate.

This sequence belongs to the PanD family. In terms of assembly, heterooctamer of four alpha and four beta subunits. It depends on pyruvate as a cofactor. Is synthesized initially as an inactive proenzyme, which is activated by self-cleavage at a specific serine bond to produce a beta-subunit with a hydroxyl group at its C-terminus and an alpha-subunit with a pyruvoyl group at its N-terminus.

It is found in the cytoplasm. The catalysed reaction is L-aspartate + H(+) = beta-alanine + CO2. It functions in the pathway cofactor biosynthesis; (R)-pantothenate biosynthesis; beta-alanine from L-aspartate: step 1/1. Its function is as follows. Catalyzes the pyruvoyl-dependent decarboxylation of aspartate to produce beta-alanine. In Bdellovibrio bacteriovorus (strain ATCC 15356 / DSM 50701 / NCIMB 9529 / HD100), this protein is Aspartate 1-decarboxylase.